The sequence spans 310 residues: MSEELSKKHTNRLNKLQKRLRREVGSAIADYNMIEDGDKIMCCLSGGKDSYAMLDILMNLQQRAPIQFEIIAVNLDQKQPGFPEHVLPAYLEKLNVPYHILEKDTYSIVKDKIPEGKTTCSLCSRLRRGTLYGFAQRIGATKIALGHHRDDIIETLFLNMFFGGKMKAMPPKLLSDDGANVVIRPLAYCREKDLEEYANLKEFPIIPCNLCGSQENLKRAAVKDMLNQWDRQYPGRIETIFTAMQNTAPSQGVDREQFDFVSLTRDPDAPMRGDVAEANLPAFDFLDIANSGRIDLDAAKRIDIVNTYEV.

A PP-loop motif motif is present at residues 45–50 (SGGKDS). [4Fe-4S] cluster is bound by residues C120, C123, and C211.

This sequence belongs to the TtcA family. In terms of assembly, homodimer. It depends on Mg(2+) as a cofactor. [4Fe-4S] cluster is required as a cofactor.

The protein localises to the cytoplasm. The enzyme catalyses cytidine(32) in tRNA + S-sulfanyl-L-cysteinyl-[cysteine desulfurase] + AH2 + ATP = 2-thiocytidine(32) in tRNA + L-cysteinyl-[cysteine desulfurase] + A + AMP + diphosphate + H(+). It participates in tRNA modification. Catalyzes the ATP-dependent 2-thiolation of cytidine in position 32 of tRNA, to form 2-thiocytidine (s(2)C32). The sulfur atoms are provided by the cysteine/cysteine desulfurase (IscS) system. The sequence is that of tRNA-cytidine(32) 2-sulfurtransferase from Shewanella baltica (strain OS155 / ATCC BAA-1091).